Consider the following 381-residue polypeptide: Estradiol 17-beta-dehydrogenase 2 (381 aa).

Residues 4–24 traverse the membrane as a helical; Signal-anchor for type II membrane protein segment; the sequence is FASESAWLCLAAAAVLGGTLL. 83–112 provides a ligand contact to NAD(+); the sequence is QKAVLVTGADSGFGHGLAKHLDKLGFTVFA. Ser220 is a substrate binding site. Tyr233 acts as the Proton acceptor in catalysis.

The protein belongs to the short-chain dehydrogenases/reductases (SDR) family. Homodimer.

Its subcellular location is the endoplasmic reticulum membrane. It catalyses the reaction 17beta-estradiol + NAD(+) = estrone + NADH + H(+). The enzyme catalyses testosterone + NAD(+) = androst-4-ene-3,17-dione + NADH + H(+). It carries out the reaction 17beta-hydroxy-5alpha-androstan-3-one + NAD(+) = 5alpha-androstan-3,17-dione + NADH + H(+). The catalysed reaction is (20S)-hydroxypregn-4-en-3-one + NAD(+) = progesterone + NADH + H(+). Functionally, catalyzes the NAD-dependent oxidation of highly active 17beta-hydroxysteroids, such as estradiol (E2), testosterone (T), and dihydrotestosterone (DHT), to their less active forms and thus regulates the biological potency of these steroids. Oxidizes estradiol to estrone, testosterone to androstenedione, and dihydrotestosterone to 5alpha-androstan-3,17-dione. Also has 20-alpha-HSD activity. The polypeptide is Estradiol 17-beta-dehydrogenase 2 (Hsd17b2) (Mus musculus (Mouse)).